We begin with the raw amino-acid sequence, 52 residues long: Sporulation inhibitor sda (52 aa).

As to quaternary structure, forms a stable heterotetramer with KinA (comprising two molecules of each protein), by binding to the KinA dimerization/phosphotransfer domain.

Its function is as follows. Mediates a developmental checkpoint inhibiting initiation of sporulation (by preventing phosphorylation of spo0A) in response to defects in the replication initiation machinery. Inhibits autophosphorylation of the histidine protein kinase KinA, forming a molecular barricade that prevents productive interaction between the ATP-binding site in the catalytic domain and the phosphorylatable His in the phosphotransfer domain of KinA. Probably also inhibits the activity of KinB, but has relatively little effect on KinC. Has at least one target in vivo in addition to KinA as sda does not require KinA to inhibit sporulation. The polypeptide is Sporulation inhibitor sda (sda) (Bacillus subtilis (strain 168)).